We begin with the raw amino-acid sequence, 376 residues long: Ribosomal RNA large subunit methyltransferase G (376 aa).

It belongs to the methyltransferase superfamily. RlmG family.

The protein localises to the cytoplasm. It catalyses the reaction guanosine(1835) in 23S rRNA + S-adenosyl-L-methionine = N(2)-methylguanosine(1835) in 23S rRNA + S-adenosyl-L-homocysteine + H(+). Its function is as follows. Specifically methylates the guanine in position 1835 (m2G1835) of 23S rRNA. The protein is Ribosomal RNA large subunit methyltransferase G of Klebsiella pneumoniae subsp. pneumoniae (strain ATCC 700721 / MGH 78578).